Reading from the N-terminus, the 790-residue chain is Chorion peroxidase (790 aa).

The first 16 residues, 1–16 (MAKKVLLLSLYSAVLS), serve as a signal peptide directing secretion. Residues 17–209 (TWFGFGYVQC…ARIPRAIRKR (193 aa)) constitute a propeptide that is removed on maturation. At cysteine 210 the chain carries N-acetylcysteine; in Chorion peroxidase light chain. Cysteine 216 and cysteine 229 are oxidised to a cystine. A glycan (N-linked (Man) tryptophan) is linked at tryptophan 259. Histidine 305 acts as the Proton acceptor in catalysis. Residue asparagine 327 is glycosylated (N-linked (GlcNAc...) asparagine). 3',4'-dihydroxyphenylalanine is present on tyrosine 353. The cysteines at positions 433 and 440 are disulfide-linked. Tryptophan 479 is a glycosylation site (N-linked (Man) tryptophan). Histidine 551 lines the heme b pocket. A glycan (N-linked (Man) tryptophan) is linked at tryptophan 680. The cysteines at positions 746 and 774 are disulfide-linked. An N-linked (Man) tryptophan glycan is attached at tryptophan 785.

The protein belongs to the peroxidase family. XPO subfamily. Heterodimer. Heme b is required as a cofactor. Post-translationally, N-glycosylated on Trp by mannose and on Asn by N-acetylglucosamine. There is a hexose glycosylation of an unidentified residue between 654 and 708; Trp-680 is conserved in closely related species and is probably mannosylated.

Its subcellular location is the secreted. The catalysed reaction is 2 a phenolic donor + H2O2 = 2 a phenolic radical donor + 2 H2O. Its activity is regulated as follows. Extremely resistant to denaturating agents, such as SDS and organic solvents. Its function is as follows. Involved in the formation of a rigid and insoluble egg chorion by catalyzing chorion protein cross-linking through dityrosine formation and phenol oxidase-catalyzed chorion melanization. The polypeptide is Chorion peroxidase (pxt) (Aedes aegypti (Yellowfever mosquito)).